A 448-amino-acid chain; its full sequence is Enolase (448 aa).

Position 164 (Gln164) interacts with (2R)-2-phosphoglycerate. Residue Glu206 is the Proton donor of the active site. Residues Asp243, Glu289, and Asp316 each contribute to the Mg(2+) site. (2R)-2-phosphoglycerate is bound by residues Lys341, Arg370, Ser371, and Lys392. The active-site Proton acceptor is the Lys341.

It belongs to the enolase family. Requires Mg(2+) as cofactor.

It is found in the cytoplasm. The protein resides in the secreted. The protein localises to the cell surface. The catalysed reaction is (2R)-2-phosphoglycerate = phosphoenolpyruvate + H2O. It participates in carbohydrate degradation; glycolysis; pyruvate from D-glyceraldehyde 3-phosphate: step 4/5. Catalyzes the reversible conversion of 2-phosphoglycerate (2-PG) into phosphoenolpyruvate (PEP). It is essential for the degradation of carbohydrates via glycolysis. The protein is Enolase of Oenococcus oeni (strain ATCC BAA-331 / PSU-1).